The sequence spans 482 residues: ATP synthase subunit beta (482 aa).

162–169 (GGAGVGKT) contributes to the ATP binding site.

This sequence belongs to the ATPase alpha/beta chains family. As to quaternary structure, F-type ATPases have 2 components, CF(1) - the catalytic core - and CF(0) - the membrane proton channel. CF(1) has five subunits: alpha(3), beta(3), gamma(1), delta(1), epsilon(1). CF(0) has four main subunits: a(1), b(1), b'(1) and c(9-12).

It localises to the cellular thylakoid membrane. It catalyses the reaction ATP + H2O + 4 H(+)(in) = ADP + phosphate + 5 H(+)(out). Produces ATP from ADP in the presence of a proton gradient across the membrane. The catalytic sites are hosted primarily by the beta subunits. This is ATP synthase subunit beta from Nostoc punctiforme (strain ATCC 29133 / PCC 73102).